Reading from the N-terminus, the 381-residue chain is Chorismate synthase (381 aa).

NADP(+)-binding residues include Arg-41 and Arg-47. FMN-binding positions include 127-129 (RAS), 247-248 (QA), Gly-291, 306-310 (KPIPT), and Arg-332.

The protein belongs to the chorismate synthase family. In terms of assembly, homotetramer. It depends on FMNH2 as a cofactor.

It catalyses the reaction 5-O-(1-carboxyvinyl)-3-phosphoshikimate = chorismate + phosphate. It participates in metabolic intermediate biosynthesis; chorismate biosynthesis; chorismate from D-erythrose 4-phosphate and phosphoenolpyruvate: step 7/7. Catalyzes the anti-1,4-elimination of the C-3 phosphate and the C-6 proR hydrogen from 5-enolpyruvylshikimate-3-phosphate (EPSP) to yield chorismate, which is the branch point compound that serves as the starting substrate for the three terminal pathways of aromatic amino acid biosynthesis. This reaction introduces a second double bond into the aromatic ring system. In Anaeromyxobacter sp. (strain K), this protein is Chorismate synthase.